A 165-amino-acid chain; its full sequence is Cyanate hydratase (165 aa).

Residues Arg106, Glu109, and Ser132 contribute to the active site.

The protein belongs to the cyanase family.

It carries out the reaction cyanate + hydrogencarbonate + 3 H(+) = NH4(+) + 2 CO2. Catalyzes the reaction of cyanate with bicarbonate to produce ammonia and carbon dioxide. The chain is Cyanate hydratase from Laccaria bicolor (strain S238N-H82 / ATCC MYA-4686) (Bicoloured deceiver).